The following is a 1026-amino-acid chain: PH and SEC7 domain-containing protein 1 (1026 aa).

4 disordered regions span residues 25 to 97, 126 to 196, 246 to 403, and 436 to 538; these read WLPE…PGAR, SWDL…PNGL, SLDP…GPDS, and PTQS…LDST. A compositionally biased stretch (pro residues) spans 71 to 95; the sequence is RGPPSPRIAPSPWAPSSPTGQPPPG. Serine 126 and serine 156 each carry phosphoserine. Residues 168–184 are compositionally biased toward low complexity; that stretch reads PGTQGLLQGPPTQPQVG. Positions 300–313 are enriched in acidic residues; it reads DIDEVLTEREEADS. Pro residues predominate over residues 328 to 340; it reads ARPPAPRPGPCLG. Residues 349-367 show a composition bias toward acidic residues; that stretch reads NEDEDEAGGEEDVDDEVFE. The span at 447-465 shows a compositional bias: pro residues; the sequence is PPQPPAPRPDPPAPAPLAP. Residues 514 to 708 enclose the SEC7 domain; that stretch reads GAAPLGSEPP…KALYSSIKNE (195 aa). Serine 722 carries the post-translational modification Phosphoserine. Residues 758–871 enclose the PH domain; sequence AVYKHGALVR…WITRINVVAA (114 aa). The stretch at 900–926 forms a coiled coil; that stretch reads LSQEEQVRTHEAKLKAMASELREHRAT. Disordered regions lie at residues 924–943 and 978–1026; these read RATQ…QRQK and AVAQ…RWKP. A compositionally biased stretch (basic and acidic residues) spans 934 to 943; it reads GKEAEEQRQK. Polar residues predominate over residues 1000-1012; the sequence is ANTSSQPRAQCSD.

The protein belongs to the PSD family. In terms of assembly, interacts with ACTN1.

It localises to the cell membrane. The protein localises to the cell projection. It is found in the ruffle membrane. The protein resides in the cleavage furrow. Guanine nucleotide exchange factor for ARF6. Induces cytoskeletal remodeling. This Bos taurus (Bovine) protein is PH and SEC7 domain-containing protein 1 (PSD).